Here is a 312-residue protein sequence, read N- to C-terminus: Olfactory receptor 52A1 (312 aa).

At 1–27 the chain is on the extracellular side; it reads MSISNITVYMPSVLTLVGIPGLESVQC. Asn5 is a glycosylation site (N-linked (GlcNAc...) asparagine). A helical membrane pass occupies residues 28–48; that stretch reads WIGIPFCAIYLIAMIGNSLLL. Residues 49-56 lie on the Cytoplasmic side of the membrane; sequence SIIKSERS. Residues 57–77 form a helical membrane-spanning segment; that stretch reads LHEPLYIFLGMLGATDIALAS. Over 78 to 101 the chain is Extracellular; sequence SIMPKMLGIFWFNVPEIYFDSCLL. Residues Cys99 and Cys182 are joined by a disulfide bond. Residues 102 to 122 form a helical membrane-spanning segment; that stretch reads QMWFIHTLQGIESGILVAMAL. Over 123-141 the chain is Cytoplasmic; the sequence is DRYVAICYPLRHANIFTHQ. A helical transmembrane segment spans residues 142–162; that stretch reads LVIQIGTMVVLRAAILVAPCL. Topologically, residues 163-199 are extracellular; the sequence is VLIKCRFQFYHTTVISHSYCEHMAIVKLAAANVQVNK. The helical transmembrane segment at 200 to 220 threads the bilayer; sequence IYGLFVAFTVAGFDLTFITLS. At 221–240 the chain is on the cytoplasmic side; the sequence is YIQIFITVFRLPQKEARFKA. Residues 241 to 261 form a helical membrane-spanning segment; sequence FNTCIAHICVFLQFYLLAFFS. Residues 262–276 lie on the Extracellular side of the membrane; sequence FFTHRFGSHISPYIH. The helical transmembrane segment at 277 to 297 threads the bilayer; that stretch reads ILFSSIYLLVPPFLNPLVYGA. Topologically, residues 298–312 are cytoplasmic; the sequence is KTTQIRIHVVKMFCS.

This sequence belongs to the G-protein coupled receptor 1 family.

It is found in the cell membrane. Functionally, odorant receptor. The polypeptide is Olfactory receptor 52A1 (OR52A1) (Homo sapiens (Human)).